A 428-amino-acid chain; its full sequence is Palmitoyltransferase ZDHHC23-B (428 aa).

At 1–82 (MSIMKKRSSR…RVPWISGARQ (82 aa)) the chain is on the cytoplasmic side. Residues 83–99 (IDVSLIPPLILLPVFLH) traverse the membrane as a helical segment. Over 100 to 105 (IAALHY) the chain is Lumenal. The helical transmembrane segment at 106–125 (LLGIIMLTAMPITVLWYYFF) threads the bilayer. Over 126 to 132 (THRKKGR) the chain is Cytoplasmic. The helical transmembrane segment at 133–153 (TLFFLGLALFSLFYMFYLFLT) threads the bilayer. At 154 to 160 (QVVPRGE) the chain is on the lumenal side. Residues 161–181 (VTELQLAVVTAGVALTVIFLM) form a helical membrane-spanning segment. Residues 182–294 (LTKRGPGLVR…SCVGLANHRT (113 aa)) are Cytoplasmic-facing. The region spanning 250–300 (NWCAVCKVVRPQRAGHCRICGVCVLRLDHHCVWINSCVGLANHRTFLLTLL) is the DHHC domain. Cys-280 functions as the S-palmitoyl cysteine intermediate in the catalytic mechanism. A helical transmembrane segment spans residues 295–315 (FLLTLLFFLLTSIYGISLVLA). Residues 316–350 (SVCPDQRVLTALFYCPDVYSQYSSALCFTCAWYSS) lie on the Lumenal side of the membrane. The chain crosses the membrane as a helical span at residues 351–371 (IVTGGLLHLLLLQILNISLNV). Residues 372–428 (TEREARLALREKSAQRRLWGLIVHTGHYSRGFWSNWTEFLTMTEDTQPAGHKTEDLV) are Cytoplasmic-facing.

Belongs to the DHHC palmitoyltransferase family.

It is found in the golgi apparatus membrane. It localises to the golgi apparatus. Its subcellular location is the trans-Golgi network membrane. It catalyses the reaction L-cysteinyl-[protein] + hexadecanoyl-CoA = S-hexadecanoyl-L-cysteinyl-[protein] + CoA. Functionally, palmitoyltransferase that could catalyze the addition of palmitate onto various protein substrates and be involved in a variety of cellular processes. The polypeptide is Palmitoyltransferase ZDHHC23-B (Danio rerio (Zebrafish)).